A 1031-amino-acid chain; its full sequence is GTPase-activating protein DDB_G0291510 (1031 aa).

The interval 18–48 (VEKGDIDENNSGSINNRPLSPTLFSSNSSNN) is disordered. Residues 26–41 (NNSGSINNRPLSPTLF) are compositionally biased toward polar residues. The Rap-GAP domain maps to 186–404 (FKDLEQTQTE…RTFKDQLESI (219 aa)). A CNH domain is found at 471 to 881 (NEKINCLDVV…LSNDDCNLDN (411 aa)). Residues 920-950 (NNNYNNNGNNSNGGNNNNNNNNNNGCNNSLI) are disordered.

The polypeptide is GTPase-activating protein DDB_G0291510 (Dictyostelium discoideum (Social amoeba)).